Consider the following 473-residue polypeptide: Siroheme synthase (473 aa).

The tract at residues 1 to 203 (MQYLPIFTKL…GDTQAAEQQL (203 aa)) is precorrin-2 dehydrogenase /sirohydrochlorin ferrochelatase. Residues 22 to 23 (DV) and 43 to 44 (PK) contribute to the NAD(+) site. Ser128 carries the post-translational modification Phosphoserine. A uroporphyrinogen-III C-methyltransferase region spans residues 215–473 (GEVYVVGAGP…SFAQPLTDVA (259 aa)). Pro224 contributes to the S-adenosyl-L-methionine binding site. The Proton acceptor role is filled by Asp247. Catalysis depends on Lys269, which acts as the Proton donor. Residues 300-302 (GGD), Ile305, 330-331 (TA), Met382, and Gly411 contribute to the S-adenosyl-L-methionine site.

The protein in the N-terminal section; belongs to the precorrin-2 dehydrogenase / sirohydrochlorin ferrochelatase family. This sequence in the C-terminal section; belongs to the precorrin methyltransferase family.

The enzyme catalyses uroporphyrinogen III + 2 S-adenosyl-L-methionine = precorrin-2 + 2 S-adenosyl-L-homocysteine + H(+). It catalyses the reaction precorrin-2 + NAD(+) = sirohydrochlorin + NADH + 2 H(+). It carries out the reaction siroheme + 2 H(+) = sirohydrochlorin + Fe(2+). The protein operates within cofactor biosynthesis; adenosylcobalamin biosynthesis; precorrin-2 from uroporphyrinogen III: step 1/1. It functions in the pathway cofactor biosynthesis; adenosylcobalamin biosynthesis; sirohydrochlorin from precorrin-2: step 1/1. It participates in porphyrin-containing compound metabolism; siroheme biosynthesis; precorrin-2 from uroporphyrinogen III: step 1/1. Its pathway is porphyrin-containing compound metabolism; siroheme biosynthesis; siroheme from sirohydrochlorin: step 1/1. The protein operates within porphyrin-containing compound metabolism; siroheme biosynthesis; sirohydrochlorin from precorrin-2: step 1/1. Functionally, multifunctional enzyme that catalyzes the SAM-dependent methylations of uroporphyrinogen III at position C-2 and C-7 to form precorrin-2 via precorrin-1. Then it catalyzes the NAD-dependent ring dehydrogenation of precorrin-2 to yield sirohydrochlorin. Finally, it catalyzes the ferrochelation of sirohydrochlorin to yield siroheme. This Pseudoalteromonas translucida (strain TAC 125) protein is Siroheme synthase.